Reading from the N-terminus, the 216-residue chain is UPF0301 protein BBta_6966 (216 aa).

This sequence belongs to the UPF0301 (AlgH) family.

The sequence is that of UPF0301 protein BBta_6966 from Bradyrhizobium sp. (strain BTAi1 / ATCC BAA-1182).